Reading from the N-terminus, the 1774-residue chain is Collagen alpha-1(XVIII) chain (1774 aa).

An N-terminal signal peptide occupies residues 1–26; that stretch reads MAPDPSRRLCLLLLLLLSCRLVPASA. The nonhelical region 1 (NC1) stretch occupies residues 27–785; the sequence is DGNSLSPLNP…QNPGRGLIKG (759 aa). 2 disordered regions span residues 47–113 and 218–269; these read DSLE…TPAV and LPPF…LEGK. Polar residues-rich tracts occupy residues 55-87 and 244-256; these read KPQN…TPAS and LSSS…SWGN. Residues Asn-354 and Asn-361 are each glycosylated (N-linked (GlcNAc...) asparagine). One can recognise an FZ domain in the interval 365–482; sequence TSTSRCLPLP…SQEDGYCVFI (118 aa). Disulfide bonds link Cys-370–Cys-433, Cys-380–Cys-426, Cys-417–Cys-455, Cys-444–Cys-479, and Cys-448–Cys-468. One can recognise a Laminin G-like domain in the interval 522–704; it reads GPDSNSGQVA…EDRASGDFGS (183 aa). Residue Asn-585 is glycosylated (N-linked (GlcNAc...) asparagine). Residues 681 to 1458 are disordered; sequence RVSPVHCLDE…PPGPPGAMGA (778 aa). The span at 708–717 shows a compositional bias: basic and acidic residues; sequence ESSKSHKEDT. Thr-730 is subject to Phosphothreonine. A triple-helical region 1 (COL1) region spans residues 786–812; it reads GMKGQKGEPGAQGPPGPAGPQGPAGPV. Over residues 809-824 the composition is skewed to low complexity; sequence AGPVVQSPNSQPVPGA. The interval 813-822 is nonhelical region 2 (NC2); that stretch reads VQSPNSQPVP. Positions 823–878 constitute a Collagen-like 1 domain; the sequence is GAQGPPGPQGPPGKDGTPGRDGEPGDPGEDGRPGDTGPQGFPGTPGDVGPKGEKGD. The interval 823–896 is triple-helical region 2 (COL2); sequence GAQGPPGPQG…PGPPGPPGPS (74 aa). The span at 839-855 shows a compositional bias: basic and acidic residues; sequence TPGRDGEPGDPGEDGRP. The span at 884–895 shows a compositional bias: pro residues; that stretch reads RGPPGPPGPPGP. A nonhelical region 3 (NC3) region spans residues 897 to 920; the sequence is FRQDKLTFIDMEGSGFSGDIESLR. A glycan (O-linked (Xyl...) (chondroitin sulfate) serine) is linked at Ser-910. The interval 921-1042 is triple-helical region 3 (COL3); it reads GPRGFPGPPG…PGPPGPPGPG (122 aa). The segment covering 925–935 has biased composition (pro residues); that stretch reads FPGPPGPPGVP. N-linked (GlcNAc...) asparagine glycosylation is present at Asn-947. The span at 951 to 963 shows a compositional bias: low complexity; sequence APGPAGLPGVPGK. Collagen-like domains are found at residues 953 to 1007 and 1008 to 1041; these read GPAG…GSKG and DLGP…PPGP. 2 stretches are compositionally biased toward pro residues: residues 967–982 and 1026–1041; these read PGFP…PGKE and PVGP…PPGP. A nonhelical region 4 (NC4) region spans residues 1043-1065; the sequence is FAAGFDDMEGSGIPLWTTARSSD. Collagen-like domains follow at residues 1066–1117, 1118–1147, 1162–1202, and 1216–1264; these read GLQG…GPKG, EKGM…PPGP, PGPE…GEPG, and QKGA…EPGD. The segment at 1066-1148 is triple-helical region 4 (COL4); it reads GLQGPPGSPG…PGPPGPPGPV (83 aa). Over residues 1138–1147 the composition is skewed to pro residues; sequence LPGPPGPPGP. The nonhelical region 5 (NC5) stretch occupies residues 1149 to 1162; that stretch reads IYVSSEDKAIVSTP. Positions 1163-1204 are triple-helical region 5 (COL5); sequence GPEGKPGYAGFPGPAGPKGDLGSKGEQGLPGPKGEKGEPGTI. Residues 1205-1217 are nonhelical region 6 (NC6); that stretch reads FSPDGRALGHPQK. A triple-helical region 6 (COL6) region spans residues 1218–1290; sequence GAKGEPGFRG…PGPPGPPGMP (73 aa). Pro residues predominate over residues 1275-1289; that stretch reads PGPPGPPGPPGPPGM. The tract at residues 1291-1300 is nonhelical region 7 (NC7); sequence IYDSNAFVES. Residues 1301 to 1317 are compositionally biased toward low complexity; that stretch reads GRPGLPGQQGVQGPSGP. A triple-helical region 7 (COL7) region spans residues 1301–1333; sequence GRPGLPGQQGVQGPSGPKGDKGEVGPPGPPGQF. Residues 1334 to 1345 form a nonhelical region 8 (NC8) region; sequence PIDLFHLEAEMK. A compositionally biased stretch (basic and acidic residues) spans 1338-1362; sequence FHLEAEMKGDKGDRGDAGQKGERGE. Residues 1346–1369 form a triple-helical region 8 (COL8) region; that stretch reads GDKGDRGDAGQKGERGEPGAPGGG. Residues 1351–1353 carry the Cell attachment site motif; that stretch reads RGD. Residues 1370–1376 are nonhelical region 9 (NC9); that stretch reads FFSSSVP. Pro residues-rich tracts occupy residues 1376–1388, 1398–1407, 1418–1431, and 1441–1453; these read PGPP…PGIP, PPGPPGPQGP, PPGP…PSFP, and PGPP…PGPP. The triple-helical region 9 (COL9) stretch occupies residues 1377–1428; sequence GPPGPPGYPGIPGPKGESIRGPPGPPGPQGPPGIGYEGRQGPPGPPGPPGPP. Residues 1429–1441 are nonhelical region 10 (NC10); it reads SFPGPHRQTVSVP. Residues 1442–1459 form a triple-helical region 10 (COL10) region; it reads GPPGPPGPPGPPGAMGAS. The interval 1460-1774 is nonhelical region 11 (NC11); it reads AGQVRIWATY…ENSFMTSFSK (315 aa). Positions 1474–1519 are non-collagenous domain 1 association domain; sequence DKIREVPEGWLIFVAEREELYVRVRNGFRKVLLEARTALPRGTGNE. The non-collagenous domain 1 hinge region stretch occupies residues 1520-1590; sequence VAALQPPLVQ…PPARPTLSLA (71 aa). His-1591, His-1593, Asp-1595, His-1601, and Asp-1666 together coordinate Zn(2+). 2 disulfide bridges follow: Cys-1623–Cys-1763 and Cys-1725–Cys-1755.

This sequence belongs to the multiplexin collagen family. In terms of assembly, forms homotrimers. Recombinant non-collagenous domain 1 has stronger affinity to NID1, HSPG2 and laminin-1:NID1 complex and lower affinity to FBLN1 and FBLN2 than endostatin. Monomeric. Interacts with KDR/VEGFR2. Interacts with the ITGA5:ITGB1 complex. Interacts with NID1, HSPG2, laminin-1:NID1 complex, FBLN1 and FBLN2. Prolines at the third position of the tripeptide repeating unit (G-X-Y) of the triple-helical regions are hydroxylated. Post-translationally, undergoes proteolytic processing by CTSL/cathepsin-L and elastase-like proteases to generate both non-collagenous domain 1 trimers and endostatin monomers. In tissue extracts (brain, skeletal muscle, heart, kidney, testis and liver) predominantly bands of approximately 38 kDa are detected; recombinant non-collagenous domain 1 shows similar mobility. In vitro, several proteolytic cleavage sites in the non-collagenous domain 1 hinge region generating different endostatin-like peptides are reported. Expressed in liver, kidney, lung, skeletal muscle and testis.

The protein resides in the secreted. It localises to the extracellular space. The protein localises to the extracellular matrix. Its subcellular location is the basement membrane. Its function is as follows. Probably plays a major role in determining the retinal structure as well as in the closure of the neural tube. May regulate extracellular matrix-dependent motility and morphogenesis of endothelial and non-endothelial cells; the function requires homotrimerization and implicates MAPK signaling. Functionally, potently inhibits endothelial cell proliferation and angiogenesis. May inhibit angiogenesis by binding to the heparan sulfate proteoglycans involved in growth factor signaling. Inhibits VEGFA isoform VEGF165-induced endothelial cell proliferation and migration. Seems to inhibit VEGFA-mediated signaling by blocking the interaction of VEGFA to its receptor KDR/VEGFR2. Modulates endothelial cell migration in an integrin-dependent manner implicating integrin ITGA5:ITGB1 and to a lesser extent ITGAV:ITGB3 and ITGAV:ITGB5. May negatively regulate the activity of homotrimeric non-collagenous domain 1. This chain is Collagen alpha-1(XVIII) chain, found in Mus musculus (Mouse).